The chain runs to 264 residues: Probable aquaporin TIP3-1 (264 aa).

2 consecutive transmembrane segments (helical) span residues 28-48 (AAIS…GSIL) and 62-82 (GLVA…AVAV). The short motif at 90-92 (NPA) is the NPA 1 element. A run of 3 helical transmembrane segments spans residues 105-125 (LIRA…ATLL), 149-169 (AVLL…ATVI), and 176-196 (VGTI…LAGG). The NPA 2 signature appears at 204-206 (NPA). Residues 224–244 (YWLGPFVGAGLAGLLYEYLVI) form a helical membrane-spanning segment.

The protein belongs to the MIP/aquaporin (TC 1.A.8) family. TIP (TC 1.A.8.10) subfamily. Expressed in leaves and at lower levels in roots.

The protein resides in the vacuole membrane. Aquaporins facilitate the transport of water and small neutral solutes across cell membranes. May be involved in transport from the vacuolar compartment to the cytoplasm. The protein is Probable aquaporin TIP3-1 (TIP3-1) of Oryza sativa subsp. japonica (Rice).